Here is a 257-residue protein sequence, read N- to C-terminus: MALAKRIIPCLDVTAGRVVKGVNFVELRDAGDPVEIARRYDDQGADELTFLDITATSDQRDLILPIIEAVASQVFIPLTVGGGVRAVEDVRRLLNAGADKVSMNSSAVANPQLVRDAADKYGSQCIVVAIDAKRVSADGETPRWEVFTHGGRKNTGLDAIEWARRMAELGAGEILLTSMDRDGTKSGFDLALTRGVSDAVPVPVIASGGVGSLQHLADGIKDGRADAVLAASIFHYGEHTVGEAKRFMSDQGIPVRL.

Active-site residues include Asp12 and Asp131.

It belongs to the HisA/HisF family. As to quaternary structure, heterodimer of HisH and HisF.

It is found in the cytoplasm. It carries out the reaction 5-[(5-phospho-1-deoxy-D-ribulos-1-ylimino)methylamino]-1-(5-phospho-beta-D-ribosyl)imidazole-4-carboxamide + L-glutamine = D-erythro-1-(imidazol-4-yl)glycerol 3-phosphate + 5-amino-1-(5-phospho-beta-D-ribosyl)imidazole-4-carboxamide + L-glutamate + H(+). It functions in the pathway amino-acid biosynthesis; L-histidine biosynthesis; L-histidine from 5-phospho-alpha-D-ribose 1-diphosphate: step 5/9. Its function is as follows. IGPS catalyzes the conversion of PRFAR and glutamine to IGP, AICAR and glutamate. The HisF subunit catalyzes the cyclization activity that produces IGP and AICAR from PRFAR using the ammonia provided by the HisH subunit. The chain is Imidazole glycerol phosphate synthase subunit HisF from Burkholderia ambifaria (strain MC40-6).